Reading from the N-terminus, the 233-residue chain is ATP-dependent Clp protease proteolytic subunit 1 (233 aa).

Ser136 serves as the catalytic Nucleophile. His161 is an active-site residue.

The protein belongs to the peptidase S14 family. As to quaternary structure, fourteen ClpP subunits assemble into 2 heptameric rings which stack back to back to give a disk-like structure with a central cavity, resembling the structure of eukaryotic proteasomes.

It is found in the cytoplasm. The catalysed reaction is Hydrolysis of proteins to small peptides in the presence of ATP and magnesium. alpha-casein is the usual test substrate. In the absence of ATP, only oligopeptides shorter than five residues are hydrolyzed (such as succinyl-Leu-Tyr-|-NHMec, and Leu-Tyr-Leu-|-Tyr-Trp, in which cleavage of the -Tyr-|-Leu- and -Tyr-|-Trp bonds also occurs).. In terms of biological role, cleaves peptides in various proteins in a process that requires ATP hydrolysis. Has a chymotrypsin-like activity. Plays a major role in the degradation of misfolded proteins. This is ATP-dependent Clp protease proteolytic subunit 1 from Bifidobacterium longum (strain NCC 2705).